The sequence spans 404 residues: Cysteine desulfurase IscS (404 aa).

Pyridoxal 5'-phosphate contacts are provided by residues 75 to 76, Asn155, Gln183, and 203 to 205; these read AT and SAH. Lys206 bears the N6-(pyridoxal phosphate)lysine mark. Residue Thr243 coordinates pyridoxal 5'-phosphate. Cys328 functions as the Cysteine persulfide intermediate in the catalytic mechanism. Cys328 is a binding site for [2Fe-2S] cluster.

Belongs to the class-V pyridoxal-phosphate-dependent aminotransferase family. NifS/IscS subfamily. Homodimer. Forms a heterotetramer with IscU, interacts with other sulfur acceptors. It depends on pyridoxal 5'-phosphate as a cofactor.

It is found in the cytoplasm. It carries out the reaction (sulfur carrier)-H + L-cysteine = (sulfur carrier)-SH + L-alanine. It participates in cofactor biosynthesis; iron-sulfur cluster biosynthesis. Its function is as follows. Master enzyme that delivers sulfur to a number of partners involved in Fe-S cluster assembly, tRNA modification or cofactor biosynthesis. Catalyzes the removal of elemental sulfur atoms from cysteine to produce alanine. Functions as a sulfur delivery protein for Fe-S cluster synthesis onto IscU, an Fe-S scaffold assembly protein, as well as other S acceptor proteins. This Pseudomonas putida (strain ATCC 700007 / DSM 6899 / JCM 31910 / BCRC 17059 / LMG 24140 / F1) protein is Cysteine desulfurase IscS.